The primary structure comprises 120 residues: MFLLHEYDIFWTFLIIASLIPILAFWISGLLAPVSEGPEKLSSYESGIEPMGGAWLQFRIRYYMFALVFVVFDVETVFLYPWAMSFDVLGVSVFIEAFIFVLILVVGLVYAWRKGALEWS.

The next 3 helical transmembrane spans lie at 9–29 (IFWT…WISG), 64–84 (MFAL…PWAM), and 88–108 (VLGV…VVGL).

Belongs to the complex I subunit 3 family. NDH is composed of at least 16 different subunits, 5 of which are encoded in the nucleus.

The protein localises to the plastid. It localises to the chloroplast thylakoid membrane. It catalyses the reaction a plastoquinone + NADH + (n+1) H(+)(in) = a plastoquinol + NAD(+) + n H(+)(out). The catalysed reaction is a plastoquinone + NADPH + (n+1) H(+)(in) = a plastoquinol + NADP(+) + n H(+)(out). Its function is as follows. NDH shuttles electrons from NAD(P)H:plastoquinone, via FMN and iron-sulfur (Fe-S) centers, to quinones in the photosynthetic chain and possibly in a chloroplast respiratory chain. The immediate electron acceptor for the enzyme in this species is believed to be plastoquinone. Couples the redox reaction to proton translocation, and thus conserves the redox energy in a proton gradient. The protein is NAD(P)H-quinone oxidoreductase subunit 3, chloroplastic of Lolium perenne (Perennial ryegrass).